We begin with the raw amino-acid sequence, 126 residues long: Membrane-anchored ubiquitin-fold protein 2 (126 aa).

Positions 14-79 (VEVRFRLDDG…VLENNRTLAE (66 aa)) constitute a Ubiquitin-like domain. Cys123 bears the Cysteine methyl ester mark. The S-geranylgeranyl cysteine moiety is linked to residue Cys123. Positions 124–126 (TIL) are cleaved as a propeptide — removed in mature form.

Its subcellular location is the cell membrane. May serve as docking site to facilitate the association of other proteins to the plasma membrane. This chain is Membrane-anchored ubiquitin-fold protein 2 (MUB2), found in Oryza sativa subsp. japonica (Rice).